The following is a 451-amino-acid chain: Adenylosuccinate synthetase isozyme 2 (451 aa).

Residues 34–40 (GDEGKGK) and 62–64 (GHT) contribute to the GTP site. The active-site Proton acceptor is aspartate 35. Residues aspartate 35 and glycine 62 each contribute to the Mg(2+) site. Substrate is bound at residue aspartate 35. IMP-binding positions include 35 to 38 (DEGK), 60 to 63 (NAGH), threonine 157, arginine 171, asparagine 250, threonine 265, and arginine 329. Histidine 63 acts as the Proton donor in catalysis. Residue 325–331 (VTTGRKR) coordinates substrate. GTP contacts are provided by residues arginine 331, 357–359 (KLD), and 439–442 (GVGK).

This sequence belongs to the adenylosuccinate synthetase family. As to quaternary structure, homodimer. Mg(2+) is required as a cofactor.

It is found in the cytoplasm. It localises to the mitochondrion. The enzyme catalyses IMP + L-aspartate + GTP = N(6)-(1,2-dicarboxyethyl)-AMP + GDP + phosphate + 2 H(+). The protein operates within purine metabolism; AMP biosynthesis via de novo pathway; AMP from IMP: step 1/2. Its activity is regulated as follows. Inhibited competitively by AMP and IMP and non-competitively by fructose 1,6-bisphosphate. Its function is as follows. Plays an important role in the de novo pathway and in the salvage pathway of purine nucleotide biosynthesis. Catalyzes the first committed step in the biosynthesis of AMP from IMP. This chain is Adenylosuccinate synthetase isozyme 2, found in Gallus gallus (Chicken).